The sequence spans 737 residues: MSSGNSSTGTHTNGNFATLGSSPPSAVGGKGRAIPPKVTHEDASVELKTMNPERGAARGSIPLGEDIMQIARIGEVPAMQRLFDEKKFSANHKDEEGITPLHWAAINNQYAMCKFLLDSGADVNAKGGESVATPAMWAAQRCHYYIVHLLLQRGADPLLTDVQGYNILHLATIDGNAFLLVLLLHQEIPVDVVDQQGHTGLMWAAYKGYPALVDLFLRWGAHANAVDEGGLTPLHWALVKGSLPCVLKLIEYGADKFAKTRDGKTPAVVAGEMNTTRVWYRALDEYGYDLDGNAKVSSSGLASWVRNKSLMSKFFFLWPFAIVFAAVWILSNMVVYAAIPMMLVTVFGLQWVAQKAASQGPSEYRILQKTPYLSGVFAGSLFWVGFRYVFYVLPVTYSTSPILNGLFAIFFSLTTYFYIYSMVEDPGFVPKLGSRNQQRAVITELFEQWKFDEENFCVSCMVRRPLRSKHCKRCARCVAKHDHHCPWIDNCVGANNLRHFVLYITCLEVGIVLFVQLTFNYINSLPAPAQPQCNIINETLCDFVLRDTFTLVLDLWVCIQLVWITMLVAVQMIQISRNQTTYENMRGHSVDRSYPSSRAFASAVAAGTTSLNAAGLTSSGQGPNPALAQGAPRHRKHGCLQQWSSLLGIDTFFATARDGLRDGPRAVRPKNPFSRGVVTNCRDFWCDPAPYFGKREPGAAMLGGEVINYNRMYETPSRMHSGGGYQSLSVEDPEQGV.

Over residues 1–15 the composition is skewed to low complexity; it reads MSSGNSSTGTHTNGN. The segment at 1–39 is disordered; it reads MSSGNSSTGTHTNGNFATLGSSPPSAVGGKGRAIPPKVT. Over 1–313 the chain is Cytoplasmic; the sequence is MSSGNSSTGT…WVRNKSLMSK (313 aa). 5 ANK repeats span residues 96 to 125, 130 to 159, 163 to 192, 196 to 225, and 228 to 258; these read EGIT…DVNA, SVAT…DPLL, QGYN…PVDV, QGHT…HANA, and EGGL…DKFA. Helical transmembrane passes span 314-334 and 335-355; these read FFFL…SNMV and VYAA…VAQK. Residues 356–374 lie on the Cytoplasmic side of the membrane; that stretch reads AASQGPSEYRILQKTPYLS. A helical membrane pass occupies residues 375–395; sequence GVFAGSLFWVGFRYVFYVLPV. The Lumenal segment spans residues 396–401; that stretch reads TYSTSP. The chain crosses the membrane as a helical span at residues 402–422; the sequence is ILNGLFAIFFSLTTYFYIYSM. Topologically, residues 423-498 are cytoplasmic; the sequence is VEDPGFVPKL…DNCVGANNLR (76 aa). Positions 455 to 505 constitute a DHHC domain; sequence NFCVSCMVRRPLRSKHCKRCARCVAKHDHHCPWIDNCVGANNLRHFVLYIT. Catalysis depends on Cys485, which acts as the S-palmitoyl cysteine intermediate. The helical transmembrane segment at 499 to 519 threads the bilayer; the sequence is HFVLYITCLEVGIVLFVQLTF. The Lumenal portion of the chain corresponds to 520 to 548; sequence NYINSLPAPAQPQCNIINETLCDFVLRDT. A helical transmembrane segment spans residues 549 to 569; that stretch reads FTLVLDLWVCIQLVWITMLVA. Residues 570 to 737 lie on the Cytoplasmic side of the membrane; that stretch reads VQMIQISRNQ…LSVEDPEQGV (168 aa).

It belongs to the DHHC palmitoyltransferase family. AKR/ZDHHC17 subfamily.

It localises to the early endosome membrane. It is found in the golgi apparatus membrane. The enzyme catalyses L-cysteinyl-[protein] + hexadecanoyl-CoA = S-hexadecanoyl-L-cysteinyl-[protein] + CoA. In terms of biological role, palmitoyltransferase specific for casein kinase 1. The protein is Palmitoyltransferase akr1 (akr1) of Aspergillus oryzae (strain ATCC 42149 / RIB 40) (Yellow koji mold).